A 282-amino-acid polypeptide reads, in one-letter code: HMG box-containing protein R545 (282 aa).

Residues 1–282 form a disordered region; that stretch reads MPKKTATKAN…KKEASDEESD (282 aa). Acidic residues predominate over residues 16 to 29; it reads DSENDSVVSEEEDN. The segment covering 70–87 has biased composition (basic residues); sequence KGKVNAKKAPAKKAPVKK. A compositionally biased stretch (acidic residues) spans 93-121; that stretch reads DSDNEEDEASEDGSDDEEDVVSADDSDSD. Residues 127–153 are compositionally biased toward basic residues; sequence KAAKKAPAKKAPAKKAPAKKAPAKKGK. Basic and acidic residues-rich tracts occupy residues 176 to 187 and 197 to 214; these read TKKDGDKPKKPL and RMPE…KEYM. A DNA-binding region (HMG box) is located at residues 183–252; sequence PKKPLSDYQK…KAPAKGGSKS (70 aa). The segment covering 253 to 273 has biased composition (basic residues); that stretch reads TAKKAPAKKAPAKKAPAKKSK.

The polypeptide is HMG box-containing protein R545 (Acanthamoeba polyphaga mimivirus (APMV)).